Reading from the N-terminus, the 160-residue chain is Ribosomal RNA large subunit methyltransferase H (160 aa).

The disordered stretch occupies residues 44–63 (LPESRASNSATRKREEAVQI). Residues L76, G108, and 127 to 132 (LGKMTW) each bind S-adenosyl-L-methionine.

This sequence belongs to the RNA methyltransferase RlmH family. In terms of assembly, homodimer.

The protein localises to the cytoplasm. The enzyme catalyses pseudouridine(1915) in 23S rRNA + S-adenosyl-L-methionine = N(3)-methylpseudouridine(1915) in 23S rRNA + S-adenosyl-L-homocysteine + H(+). Functionally, specifically methylates the pseudouridine at position 1915 (m3Psi1915) in 23S rRNA. This Allorhizobium ampelinum (strain ATCC BAA-846 / DSM 112012 / S4) (Agrobacterium vitis (strain S4)) protein is Ribosomal RNA large subunit methyltransferase H.